Consider the following 217-residue polypeptide: Homeobox protein Hox-B7 (217 aa).

Positions 126–131 (IYPWMR) match the Antp-type hexapeptide motif. Positions 137–196 (RKRGRQTYTRYQTLELEKEFHYNRYLTRRRRIEIAHTLCLTERQIKIWFQNRRMKWKKEN) form a DNA-binding region, homeobox. The disordered stretch occupies residues 194–217 (KENKTAGPGTTGQDRAEAEEEEEE).

It belongs to the Antp homeobox family. As to quaternary structure, forms a DNA-binding heterodimer with transcription factor PBX1.

It is found in the nucleus. Functionally, sequence-specific transcription factor which is part of a developmental regulatory system that provides cells with specific positional identities on the anterior-posterior axis. The protein is Homeobox protein Hox-B7 (HOXB7) of Homo sapiens (Human).